The primary structure comprises 427 residues: D-inositol 3-phosphate glycosyltransferase 2 (427 aa).

His14 provides a ligand contact to 1D-myo-inositol 3-phosphate. Residues 20–21 (QP) and Gly28 each bind UDP-N-acetyl-alpha-D-glucosamine. 1D-myo-inositol 3-phosphate contacts are provided by residues 25 to 30 (DAGGMN), Lys83, Tyr116, Thr140, and Arg160. The UDP-N-acetyl-alpha-D-glucosamine site is built by Arg234, Lys239, and Val300. Tyr309, Arg310, and Ala312 together coordinate Mg(2+). Residues Glu322 and Glu330 each coordinate UDP-N-acetyl-alpha-D-glucosamine. Thr336 is a Mg(2+) binding site.

The protein belongs to the glycosyltransferase group 1 family. MshA subfamily. In terms of assembly, homodimer.

It carries out the reaction 1D-myo-inositol 3-phosphate + UDP-N-acetyl-alpha-D-glucosamine = 1D-myo-inositol 2-acetamido-2-deoxy-alpha-D-glucopyranoside 3-phosphate + UDP + H(+). Catalyzes the transfer of a N-acetyl-glucosamine moiety to 1D-myo-inositol 3-phosphate to produce 1D-myo-inositol 2-acetamido-2-deoxy-glucopyranoside 3-phosphate in the mycothiol biosynthesis pathway. In Catenulispora acidiphila (strain DSM 44928 / JCM 14897 / NBRC 102108 / NRRL B-24433 / ID139908), this protein is D-inositol 3-phosphate glycosyltransferase 2.